The chain runs to 6885 residues: Nesprin-2 (6885 aa).

The segment at 1–286 is actin-binding; sequence MASSPELPTE…YVAQFLQYSK (286 aa). The Cytoplasmic portion of the chain corresponds to 1–6834; the sequence is MASSPELPTE…QRSFLSRVVR (6834 aa). 2 consecutive Calponin-homology (CH) domains span residues 31–136 and 181–286; these read DTQK…LHFH and MSAR…QYSK. 7 Spectrin repeats span residues 297 to 378, 379 to 472, 473 to 575, 576 to 680, 735 to 838, 839 to 932, and 933 to 1034; these read GKVK…HQIN, AWKI…RINN, ILEK…KNIY, NVKS…KQDQ, VAKD…KNLT, DVSP…LHHE, and LSLY…KCAS. Residues 297 to 6782 are a coiled coil; that stretch reads GKVKDAMGWL…PASPLPSFDE (6486 aa). S841 is modified (phosphoserine). N6-acetyllysine is present on K955. Positions 1042-1059 are enriched in polar residues; the sequence is PTAGGTSKNEGTITTSEN. Residues 1042 to 1084 form a disordered region; that stretch reads PTAGGTSKNEGTITTSENRGGDPHSEAPFAKSDNQPSTEKAME. Spectrin repeat units lie at residues 1121–1212, 1263–1323, 1324–1419, 1420–1524, 1525–1636, 1637–1738, 1739–1830, 1831–1938, 1939–2036, 2037–2132, 2133–2243, and 2244–2360; these read TYRD…TLNT, NIQD…DTLK, ALED…YGVQ, EEFT…ALVT, ECLE…KTED, YYEN…TGES, NCHA…TKKS, VLQD…AKEL, EDSL…EEED, KLLP…LAST, YLSH…SVQN, and LDGH…LNSI. A compositionally biased stretch (basic and acidic residues) spans 2368-2382; sequence EKKGKFTLPGREKQA. A disordered region spans residues 2368-2394; the sequence is EKKGKFTLPGREKQATSDVQESTQESA. A compositionally biased stretch (polar residues) spans 2383–2393; sequence TSDVQESTQES. Spectrin repeat units lie at residues 2432–2513, 2514–2620, 2621–2717, 2718–2831, 2832–2933, 2934–3036, 3037–3142, 3143–3248, 3249–3352, 3353–3465, 3466–3573, 3574–3679, 3680–3777, 3778–3880, 3881–3986, and 3987–4086; these read DERK…TLKK, NKES…KYSQ, QVVE…ETLE, PLHL…QLEF, KLEE…FIQN, TCNE…EKIK, QLDT…NMVL, ELSP…DLRT, NVLN…AQET, EAER…MWCE, ELKQ…KVQK, NKEL…SNEV, LKSS…ECRT, SQLN…KIME, SLPQ…VTQE, and QNEL…LPAV. The residue at position 2781 (S2781) is a Phosphoserine. Basic and acidic residues-rich tracts occupy residues 4073–4083 and 4093–4102; these read QEQEGVERDRL and VAERDASERK. 4 disordered regions span residues 4073–4162, 4184–4232, 4335–4363, and 4416–4448; these read QEQE…SGTI, DSLN…KTRP, EKHSEDQHPTILKKSSEPEHQEALQPVNL, and HDNDTTQESSASNQASSPENDVPDSILSPQGQN. Phosphoserine is present on S4108. 2 stretches are compositionally biased toward basic and acidic residues: residues 4122-4134 and 4144-4155; these read SSVKSDNGDEKAE and WKHDKDMEEDRA. One copy of the Spectrin 36 repeat lies at 4229–4348; that stretch reads KTRPEPTEVL…EDQHPTILKK (120 aa). Basic and acidic residues predominate over residues 4335-4356; sequence EKHSEDQHPTILKKSSEPEHQE. Positions 4421-4434 are enriched in polar residues; it reads TQESSASNQASSPE. Spectrin repeat units lie at residues 4520–4639, 4640–4727, 4728–4837, 4838–4943, 4944–5051, 5052–5164, 5165–5266, 5267–5391, 5392–5487, 5488–5589, 5590–5704, 5705–5799, 5800–5907, 5908–6017, 6018–6135, 6136–6243, and 6244–6355; these read NMTE…RSYQ, NEIK…RARY, TELS…QSLL, QKWE…QALL, KHLL…QEKL, HQLQ…KIQH, LEQL…TQVN, QLKT…KAYS, NAHG…MLLV, KANE…CSEL, QGIG…QWQD, FTTS…PQLA, EMIK…RVAI, RKQE…VKKL, KETF…EETW, RLWQ…LRHF, and TNQR…PGLE. S5785 carries the phosphoserine modification. Over residues 6354–6367 the composition is skewed to acidic residues; that stretch reads LEDEKEASENETDM. The segment at 6354–6508 is disordered; that stretch reads LEDEKEASEN…GTDGGKEGPR (155 aa). Phosphoserine is present on residues S6361, S6384, S6411, S6428, S6429, S6430, and S6459. The segment covering 6368 to 6384 has biased composition (basic and acidic residues); the sequence is EDPREIQTDSWRKRGES. 3 Spectrin repeats span residues 6461–6549, 6550–6665, and 6666–6782; these read SCPE…KLKI, KQNL…QCQD, and FHQL…SFDE. Residues 6463–6474 are compositionally biased toward basic and acidic residues; it reads PEHHYKQMEGDR. A compositionally biased stretch (pro residues) spans 6477–6489; the sequence is PPVPPASSTPYKP. The span at 6490–6499 shows a compositional bias: low complexity; the sequence is PYGKLLLPPG. Positions 6769–6824 are disordered; the sequence is GTQNPASPLPSFDEVDSGDQPPATSVPAPRAKQFRAVRTTEGEEETESRVPGSTRP. The KASH domain occupies 6826-6885; it reads RSFLSRVVRAALPLQLLLLLLLLLACLLPSSEEDYSCTQANNFARSFYPMLRYTNGPPPT. A helical; Anchor for type IV membrane protein membrane pass occupies residues 6835–6855; the sequence is AALPLQLLLLLLLLLACLLPS. The Perinuclear space segment spans residues 6856-6885; sequence SEEDYSCTQANNFARSFYPMLRYTNGPPPT. Positions 6872 to 6885 are sufficient for interaction with SUN2; it reads FYPMLRYTNGPPPT.

It belongs to the nesprin family. Core component of LINC complexes which are composed of inner nuclear membrane SUN domain-containing proteins coupled to outer nuclear membrane KASH domain-containing nesprins. SUN and KASH domain-containing proteins seem to bind each other promiscuously; however, some LINC complex constituents are tissue- or cell type-specific. At least SUN1/2-containing core LINC complexes are proposed to be hexameric composed of three protomers of each KASH and SUN domain-containing protein. The SUN2:SYNE2/KASH2 complex is a heterohexamer; the homotrimeric cloverleave-like conformation of the SUN domain is a prerequisite for LINC complex formation in which three separate SYNE2/KASH2 peptides bind at the interface of adjacent SUN domains. Interacts with EMD, LMNA, MKS3 and F-actin via its N-terminal domain. Interacts with DCTN1 and DYNC1I1/2; suggesting the association with the dynein-dynactin motor complex. Associates with kinesin motor complexes. Interacts with TMEM67. Interacts (via KASH domain) with TMEM258. Interacts with BROX; this interaction promotes SYN2 ubiquitination and facilitates the relaxation of mechanical stress imposed by compressive actin fibers at the rupture site. Post-translationally, the disulfid bond with SUN2 is required for stability of the SUN2:SYNE2/KASH2 LINC complex under tensile forces though not required for the interaction. Ubiquitinated, targeting it for degradation. In terms of tissue distribution, widely expressed, with higher level in kidney, adult and fetal liver, stomach and placenta. Weakly expressed in skeletal muscle and brain. Isoform 5 is highly expressed in pancreas, skeletal muscle and heart.

It is found in the nucleus outer membrane. The protein resides in the sarcoplasmic reticulum membrane. Its subcellular location is the cell membrane. It localises to the cytoplasm. The protein localises to the cytoskeleton. It is found in the mitochondrion. The protein resides in the nucleus. Its subcellular location is the nucleoplasm. It localises to the myofibril. The protein localises to the sarcomere. It is found in the z line. The protein resides in the cell junction. Its subcellular location is the focal adhesion. In terms of biological role, multi-isomeric modular protein which forms a linking network between organelles and the actin cytoskeleton to maintain the subcellular spatial organization. As a component of the LINC (LInker of Nucleoskeleton and Cytoskeleton) complex involved in the connection between the nuclear lamina and the cytoskeleton. The nucleocytoplasmic interactions established by the LINC complex play an important role in the transmission of mechanical forces across the nuclear envelope and in nuclear movement and positioning. Specifically, SYNE2 and SUN2 assemble in arrays of transmembrane actin-associated nuclear (TAN) lines which are bound to F-actin cables and couple the nucleus to retrograde actin flow during actin-dependent nuclear movement. May be involved in nucleus-centrosome attachment. During interkinetic nuclear migration (INM) at G2 phase and nuclear migration in neural progenitors its LINC complex association with SUN1/2 and probable association with cytoplasmic dynein-dynactin motor complexes functions to pull the nucleus toward the centrosome; SYNE1 and SYNE2 may act redundantly. During INM at G1 phase mediates respective LINC complex association with kinesin to push the nucleus away from the centrosome. Involved in nuclear migration in retinal photoreceptor progenitors. Required for centrosome migration to the apical cell surface during early ciliogenesis. Facilitates the relaxation of mechanical stress imposed by compressive actin fibers at the rupture site through its nteraction with SYN2. The protein is Nesprin-2 of Homo sapiens (Human).